The primary structure comprises 127 residues: Holo-[acyl-carrier-protein] synthase (127 aa).

Mg(2+) is bound by residues aspartate 9 and glutamate 58.

It belongs to the P-Pant transferase superfamily. AcpS family. The cofactor is Mg(2+).

Its subcellular location is the cytoplasm. The catalysed reaction is apo-[ACP] + CoA = holo-[ACP] + adenosine 3',5'-bisphosphate + H(+). Its function is as follows. Transfers the 4'-phosphopantetheine moiety from coenzyme A to a Ser of acyl-carrier-protein. The polypeptide is Holo-[acyl-carrier-protein] synthase (Shewanella baltica (strain OS195)).